Reading from the N-terminus, the 321-residue chain is o-succinylbenzoate synthase (321 aa).

The active-site Proton donor is the K110. Mg(2+) is bound by residues D138, E165, and D188. Catalysis depends on K212, which acts as the Proton acceptor.

This sequence belongs to the mandelate racemase/muconate lactonizing enzyme family. MenC type 1 subfamily. A divalent metal cation serves as cofactor.

It carries out the reaction (1R,6R)-6-hydroxy-2-succinyl-cyclohexa-2,4-diene-1-carboxylate = 2-succinylbenzoate + H2O. Its pathway is quinol/quinone metabolism; 1,4-dihydroxy-2-naphthoate biosynthesis; 1,4-dihydroxy-2-naphthoate from chorismate: step 4/7. It participates in quinol/quinone metabolism; menaquinone biosynthesis. Converts 2-succinyl-6-hydroxy-2,4-cyclohexadiene-1-carboxylate (SHCHC) to 2-succinylbenzoate (OSB). The chain is o-succinylbenzoate synthase from Mycolicibacterium smegmatis (strain ATCC 700084 / mc(2)155) (Mycobacterium smegmatis).